A 283-amino-acid polypeptide reads, in one-letter code: uncharacterized protein (283 aa).

Aspartate 121 is a catalytic residue.

It belongs to the pseudouridine synthase RluA family.

It catalyses the reaction a uridine in RNA = a pseudouridine in RNA. This is an uncharacterized protein from Bacillus subtilis (strain 168).